The sequence spans 74 residues: Peptide BmKb1 (74 aa).

The first 22 residues, 1 to 22, serve as a signal peptide directing secretion; that stretch reads MEIKYLLTVFLVLLIVSDHCQA. K40 carries the post-translational modification Lysine amide. The propeptide occupies 46-74; sequence DLNGYIDHFKNFRKRDAELEELLSKLPIY.

Belongs to the non-disulfide-bridged peptide (NDBP) superfamily. Short antimicrobial peptide (group 4) family. In terms of tissue distribution, expressed by the venom gland.

The protein localises to the secreted. The protein resides in the target cell membrane. Functionally, has antibacterial activity against Gram-positive bacteria S.aureus, M.luteus, B.subtilis, and Gram-negative bacteria E.coli, and P.aeruginosa. The polypeptide is Peptide BmKb1 (Olivierus martensii (Manchurian scorpion)).